The following is a 262-amino-acid chain: Thiamine thiazole synthase (262 aa).

NAD(+)-binding positions include Ser-40, 59–60 (ER), Gly-67, Val-133, and 159–161 (HID). Fe cation is bound by residues Asp-161 and His-176. NAD(+)-binding residues include Ser-179 and Met-226. Arg-236 is a binding site for glycine.

It belongs to the THI4 family. Homooctamer; tetramer of dimers. Requires Fe(2+) as cofactor.

The enzyme catalyses hydrogen sulfide + glycine + NAD(+) = ADP-5-ethyl-4-methylthiazole-2-carboxylate + nicotinamide + 3 H2O + H(+). It functions in the pathway cofactor biosynthesis; thiamine diphosphate biosynthesis. Functionally, involved in the biosynthesis of the thiazole moiety of thiamine. Catalyzes the conversion of NAD and glycine to adenosine diphosphate 5-(2-hydroxyethyl)-4-methylthiazole-2-carboxylate (ADT), an adenylated thiazole intermediate, using free sulfide as a source of sulfur. The chain is Thiamine thiazole synthase from Methanococcus maripaludis (strain C7 / ATCC BAA-1331).